A 318-amino-acid chain; its full sequence is ATP phosphoribosyltransferase regulatory subunit (318 aa).

It belongs to the class-II aminoacyl-tRNA synthetase family. HisZ subfamily. Heteromultimer composed of HisG and HisZ subunits.

It is found in the cytoplasm. Its pathway is amino-acid biosynthesis; L-histidine biosynthesis; L-histidine from 5-phospho-alpha-D-ribose 1-diphosphate: step 1/9. In terms of biological role, required for the first step of histidine biosynthesis. May allow the feedback regulation of ATP phosphoribosyltransferase activity by histidine. This is ATP phosphoribosyltransferase regulatory subunit from Lactococcus lactis subsp. cremoris (strain MG1363).